Here is a 212-residue protein sequence, read N- to C-terminus: Thymidylate kinase (212 aa).

Residue 10–17 participates in ATP binding; it reads GIDGCGKT.

This sequence belongs to the thymidylate kinase family.

The catalysed reaction is dTMP + ATP = dTDP + ADP. Its function is as follows. Phosphorylation of dTMP to form dTDP in both de novo and salvage pathways of dTTP synthesis. The protein is Thymidylate kinase of Prochlorococcus marinus (strain MIT 9312).